We begin with the raw amino-acid sequence, 525 residues long: GMP synthase [glutamine-hydrolyzing] (525 aa).

The Glutamine amidotransferase type-1 domain occupies 8-207 (KILILDFGSQ…VMDICGCDNK (200 aa)). Catalysis depends on cysteine 85, which acts as the Nucleophile. Catalysis depends on residues histidine 181 and glutamate 183. Residues 208 to 400 (WQPASIIEDA…LGLPYDMLYR (193 aa)) enclose the GMPS ATP-PPase domain. 235 to 241 (SGGVDSS) serves as a coordination point for ATP.

Homodimer.

The catalysed reaction is XMP + L-glutamine + ATP + H2O = GMP + L-glutamate + AMP + diphosphate + 2 H(+). It functions in the pathway purine metabolism; GMP biosynthesis; GMP from XMP (L-Gln route): step 1/1. Catalyzes the synthesis of GMP from XMP. The sequence is that of GMP synthase [glutamine-hydrolyzing] from Shewanella amazonensis (strain ATCC BAA-1098 / SB2B).